The primary structure comprises 208 residues: Small ribosomal subunit protein uS4 (208 aa).

In terms of domain architecture, S4 RNA-binding spans 98 to 161 (RRLDNVIYRL…RKMPVIAEAQ (64 aa)).

It belongs to the universal ribosomal protein uS4 family. Part of the 30S ribosomal subunit. Contacts protein S5. The interaction surface between S4 and S5 is involved in control of translational fidelity.

Its function is as follows. One of the primary rRNA binding proteins, it binds directly to 16S rRNA where it nucleates assembly of the body of the 30S subunit. Functionally, with S5 and S12 plays an important role in translational accuracy. The protein is Small ribosomal subunit protein uS4 of Oleidesulfovibrio alaskensis (strain ATCC BAA-1058 / DSM 17464 / G20) (Desulfovibrio alaskensis).